Reading from the N-terminus, the 156-residue chain is Small ribosomal subunit protein uS7 (156 aa).

Belongs to the universal ribosomal protein uS7 family. In terms of assembly, part of the 30S ribosomal subunit. Contacts proteins S9 and S11.

Its function is as follows. One of the primary rRNA binding proteins, it binds directly to 16S rRNA where it nucleates assembly of the head domain of the 30S subunit. Is located at the subunit interface close to the decoding center, probably blocks exit of the E-site tRNA. In Chlorobaculum parvum (strain DSM 263 / NCIMB 8327) (Chlorobium vibrioforme subsp. thiosulfatophilum), this protein is Small ribosomal subunit protein uS7.